Here is a 147-residue protein sequence, read N- to C-terminus: C-glycoside deglycosidase beta subunit (147 aa).

This sequence belongs to the C-glycoside deglycosidase beta subunit family. In terms of assembly, heterooctamer composed of four alpha subunits (DfgA) and four beta subunits (DfgB). Requires Mn(2+) as cofactor.

The catalysed reaction is 3''-dehydroisoorientin = 1,5-anhydro-D-erythro-hex-1-en-3-ulose + luteolin. It carries out the reaction 3''-dehydroisovitexin = 1,5-anhydro-D-erythro-hex-1-en-3-ulose + apigenin. Its activity is regulated as follows. Activity is strongly reduced in the presence of chelating agents. Functionally, carbon-carbon bond-cleaving enzyme which participates in the metabolism of C-glycosides. Acts on the C6-glycosylated compounds 3''-dehydroisoorientin (3''-oxo-homoorientin) and 3''-dehydroisovitexin (3''-oxo-isovitexin). This is C-glycoside deglycosidase beta subunit from Eubacterium cellulosolvens (strain ATCC 43171 / JCM 9499 / 6) (Cillobacterium cellulosolvens).